The following is a 436-amino-acid chain: KICSTOR complex protein kaptin (436 aa).

Met1 is subject to N-acetylmethionine.

Part of the KICSTOR complex composed of KPTN, ITFG2, KICS2 and SZT2. SZT2 probably serves as a link between the other three proteins in the KICSTOR complex and mediates the direct interaction with the GATOR1 complex. May associate with F-actin filaments.

Its subcellular location is the lysosome membrane. The protein resides in the cell projection. The protein localises to the lamellipodium. It localises to the stereocilium. In terms of biological role, as part of the KICSTOR complex functions in the amino acid-sensing branch of the TORC1 signaling pathway. Recruits, in an amino acid-independent manner, the GATOR1 complex to the lysosomal membranes and allows its interaction with GATOR2 and the RAG GTPases. Functions upstream of the RAG GTPases and is required to negatively regulate mTORC1 signaling in absence of amino acids. In absence of the KICSTOR complex mTORC1 is constitutively localized to the lysosome and activated. The KICSTOR complex is also probably involved in the regulation of mTORC1 by glucose. This is KICSTOR complex protein kaptin from Homo sapiens (Human).